A 174-amino-acid polypeptide reads, in one-letter code: Protein FanG (174 aa).

The N-terminal stretch at 1–21 (MKKLYKAITVICILMSNLQSA) is a signal peptide. A disulfide bridge connects residues Cys41 and Cys75.

The protein resides in the fimbrium. Functionally, involved in the biosynthesis of K99 fimbriae. The chain is Protein FanG (fanG) from Escherichia coli.